A 162-amino-acid polypeptide reads, in one-letter code: Transcription antitermination protein NusB (162 aa).

The protein belongs to the NusB family.

In terms of biological role, involved in transcription antitermination. Required for transcription of ribosomal RNA (rRNA) genes. Binds specifically to the boxA antiterminator sequence of the ribosomal RNA (rrn) operons. The sequence is that of Transcription antitermination protein NusB from Mycobacterium sp. (strain JLS).